The following is a 59-amino-acid chain: MFAGLPSLTHEQQQKAVERIQELMAQGMSSGQAIALVAEELRANHSGELIVARFEDEDE.

This sequence belongs to the UPF0181 family.

In Shigella flexneri serotype 5b (strain 8401), this protein is UPF0181 protein YoaH.